Here is a 339-residue protein sequence, read N- to C-terminus: Uroporphyrinogen decarboxylase (339 aa).

Substrate contacts are provided by residues 23-27, D72, Y147, T202, and H315; that span reads RQAGR.

Belongs to the uroporphyrinogen decarboxylase family. As to quaternary structure, homodimer.

The protein localises to the cytoplasm. The catalysed reaction is uroporphyrinogen III + 4 H(+) = coproporphyrinogen III + 4 CO2. It participates in porphyrin-containing compound metabolism; protoporphyrin-IX biosynthesis; coproporphyrinogen-III from 5-aminolevulinate: step 4/4. Catalyzes the decarboxylation of four acetate groups of uroporphyrinogen-III to yield coproporphyrinogen-III. This chain is Uroporphyrinogen decarboxylase, found in Geotalea uraniireducens (strain Rf4) (Geobacter uraniireducens).